Here is a 325-residue protein sequence, read N- to C-terminus: Dimethylallyltranstransferase (325 aa).

Isopentenyl diphosphate-binding residues include arginine 54 and histidine 84. Residues aspartate 91 and aspartate 95 each contribute to the Mg(2+) site. Residues 91-95 (DRVVD) carry the DDXXD motif motif. Residue arginine 101 coordinates isopentenyl diphosphate. A DDXXD motif motif is present at residues 217-221 (RDIIA).

Belongs to the FPP/GGPP synthase family. It depends on Mg(2+) as a cofactor.

The enzyme catalyses isopentenyl diphosphate + dimethylallyl diphosphate = (2E)-geranyl diphosphate + diphosphate. Its pathway is isoprenoid biosynthesis; geranyl diphosphate biosynthesis; geranyl diphosphate from dimethylallyl diphosphate and isopentenyl diphosphate: step 1/1. Its function is as follows. Catalyzes the addition of isopentenyl diphosphate (IPP) onto dimethylallyl diphosphate (DMAPP) to form geranyl pyrophosphate (GPP). Is probably involved in the biosynthesis of decaprenyl diphosphate, which is required for mycobacterial cell wall synthesis. Could be required for host endothelial-cell invasion and/or intracellular survival. This is Dimethylallyltranstransferase from Mycobacterium tuberculosis (strain ATCC 25618 / H37Rv).